Consider the following 385-residue polypeptide: Acetate kinase (385 aa).

Asn-9 is a binding site for Mg(2+). Lys-16 serves as a coordination point for ATP. A substrate-binding site is contributed by Arg-87. Catalysis depends on Asp-144, which acts as the Proton donor/acceptor. ATP-binding positions include 202–206 (HLGSG) and 277–279 (DIR). Residue Glu-373 coordinates Mg(2+).

The protein belongs to the acetokinase family. In terms of assembly, homodimer. It depends on Mg(2+) as a cofactor. The cofactor is Mn(2+).

The protein resides in the cytoplasm. The catalysed reaction is acetate + ATP = acetyl phosphate + ADP. It functions in the pathway metabolic intermediate biosynthesis; acetyl-CoA biosynthesis; acetyl-CoA from acetate: step 1/2. Catalyzes the formation of acetyl phosphate from acetate and ATP. Can also catalyze the reverse reaction. The chain is Acetate kinase from Rickettsia akari (strain Hartford).